The following is an 83-amino-acid chain: Cytochrome b559 subunit alpha (83 aa).

Residues 21–35 traverse the membrane as a helical segment; the sequence is IIHTITVPMLFLAGW. Residue H23 coordinates heme.

The protein belongs to the PsbE/PsbF family. As to quaternary structure, heterodimer of an alpha subunit and a beta subunit. PSII is composed of 1 copy each of membrane proteins PsbA, PsbB, PsbC, PsbD, PsbE, PsbF, PsbH, PsbI, PsbJ, PsbK, PsbL, PsbM, PsbT, PsbX, PsbY, PsbZ, Psb30/Ycf12, peripheral proteins PsbO, CyanoQ (PsbQ), PsbU, PsbV and a large number of cofactors. It forms dimeric complexes. Heme b is required as a cofactor.

The protein resides in the cellular thylakoid membrane. Functionally, this b-type cytochrome is tightly associated with the reaction center of photosystem II (PSII). PSII is a light-driven water:plastoquinone oxidoreductase that uses light energy to abstract electrons from H(2)O, generating O(2) and a proton gradient subsequently used for ATP formation. It consists of a core antenna complex that captures photons, and an electron transfer chain that converts photonic excitation into a charge separation. This is Cytochrome b559 subunit alpha from Acaryochloris marina (strain MBIC 11017).